Here is a 273-residue protein sequence, read N- to C-terminus: MASSLELPKFEPDRDRLVWYLAYGSNLSSQTFREDRQITPQAAVTITVPGWRLTLSSAGFPYREPSFASIVNVGSAGPTDEKHDGPCELPLHGTAYLITWSQWIKIVASEGGGIVYKEALLRGQPIQPQDQQRWGAELSVLTLVSTMERWPEPRPSQRYMGLILDGARAADFPASYIAQIRHKHPCYQPPSTTWERIGATLFLGFWTPVLTLLSLLTHAAARAGPGDDGHVPEGVRALVRFAMFTMWWVHDLIWSRIWGRGDGLFPGAMQLNG.

Belongs to the class-I pyridoxal-phosphate-dependent aminotransferase family.

The enzyme catalyses an alpha-(gamma-L-glutamyl)-L-amino acid = 5-oxo-L-proline + an L-alpha-amino acid. Its pathway is mycotoxin biosynthesis. In terms of biological role, gamma-glutamyl cyclotransferase; part of the gene cluster that mediates the biosynthesis of aspirochlorine (or antibiotic A30641), an unusual halogenated spiro compound with distinctive antifungal properties due to selective inhibition of protein biosynthesis, and which is also active against bacteria, viruses, and murine tumor cells. The non-ribosomal peptide synthetase (NRPS) aclP is responsible the formation of the diketopiperazine (DKP) core from the condensation of 2 phenylalanine residues. One Phe residue is tailored into chlorotyrosine by hydroxylation and chlorination, whereas the second Phe undergoes an unprecedented C-C bond cleavage to be converted into glycine. After formation of the DKP, sulfur is incorporated into the DKP by conjugation with glutathione by aclG, followed by its stepwise degradation to the thiol by aclI, aclJ and aclK, and the dithiol oxidation by aclT. In addition, oxygenases (aclB, aclC, aclL and aclO) and O-methyltransferases (aclM and aclU) act as tailoring enzymes to produce the intermediate dechloroaspirochlorine. Ultimately, chlorination of dechloroaspirochlorine by the halogenase aclH is the last step in the aspirochlorine pathway. The protein is Gamma-glutamyl cyclotransferase aclK of Aspergillus oryzae (strain ATCC 42149 / RIB 40) (Yellow koji mold).